We begin with the raw amino-acid sequence, 136 residues long: Small ribosomal subunit protein bS6 (136 aa).

The segment covering Glu97–Glu128 has biased composition (basic and acidic residues). A disordered region spans residues Glu97 to Glu136.

It belongs to the bacterial ribosomal protein bS6 family.

In terms of biological role, binds together with bS18 to 16S ribosomal RNA. The polypeptide is Small ribosomal subunit protein bS6 (Bartonella bacilliformis (strain ATCC 35685 / KC583 / Herrer 020/F12,63)).